A 445-amino-acid polypeptide reads, in one-letter code: KICSTOR subunit 2 (445 aa).

Belongs to the KICS2 family. As to quaternary structure, part of the KICSTOR complex composed of KPTN, ITFG2, KICS2 and SZT2. SZT2 probably serves as a link between the other three proteins in the KICSTOR complex and may mediate the direct interaction with the GATOR complex via GATOR1. The KICSTOR complex interacts directly with the GATOR1 complex and most probably indirectly with the GATOR2 complex in an amino acid-independent manner.

It localises to the lysosome membrane. Its function is as follows. As part of the KICSTOR complex functions in the amino acid-sensing branch of the TORC1 signaling pathway. Recruits, in an amino acid-independent manner, the GATOR1 complex to the lysosomal membranes and allows its interaction with GATOR2 and the RAG GTPases. Functions upstream of the RAG GTPases and is required to negatively regulate mTORC1 signaling in absence of amino acids. In absence of the KICSTOR complex mTORC1 is constitutively localized to the lysosome and activated. The KICSTOR complex is also probably involved in the regulation of mTORC1 by glucose. The sequence is that of KICSTOR subunit 2 from Homo sapiens (Human).